Reading from the N-terminus, the 154-residue chain is Endoribonuclease YbeY (154 aa).

Zn(2+) is bound by residues histidine 114, histidine 118, and histidine 124.

This sequence belongs to the endoribonuclease YbeY family. Zn(2+) is required as a cofactor.

Its subcellular location is the cytoplasm. Its function is as follows. Single strand-specific metallo-endoribonuclease involved in late-stage 70S ribosome quality control and in maturation of the 3' terminus of the 16S rRNA. The chain is Endoribonuclease YbeY from Haemophilus influenzae (strain PittEE).